We begin with the raw amino-acid sequence, 305 residues long: Phosphoribosylaminoimidazole-succinocarboxamide synthase (305 aa).

The protein belongs to the SAICAR synthetase family.

The catalysed reaction is 5-amino-1-(5-phospho-D-ribosyl)imidazole-4-carboxylate + L-aspartate + ATP = (2S)-2-[5-amino-1-(5-phospho-beta-D-ribosyl)imidazole-4-carboxamido]succinate + ADP + phosphate + 2 H(+). The protein operates within purine metabolism; IMP biosynthesis via de novo pathway; 5-amino-1-(5-phospho-D-ribosyl)imidazole-4-carboxamide from 5-amino-1-(5-phospho-D-ribosyl)imidazole-4-carboxylate: step 1/2. This chain is Phosphoribosylaminoimidazole-succinocarboxamide synthase, found in Tropheryma whipplei (strain Twist) (Whipple's bacillus).